The chain runs to 174 residues: Co-chaperone protein HscB homolog (174 aa).

Positions 2-74 (NYFDLFNVVP…LRRAEHMLSL (73 aa)) constitute a J domain.

This sequence belongs to the HscB family. Interacts with HscA and stimulates its ATPase activity.

In terms of biological role, co-chaperone involved in the maturation of iron-sulfur cluster-containing proteins. Seems to help targeting proteins to be folded toward HscA. The polypeptide is Co-chaperone protein HscB homolog (Shewanella frigidimarina (strain NCIMB 400)).